The sequence spans 670 residues: MESQASENGSQTSSGVTDDYSSWYIEEPLGAEEVQPEGVNPLCQPTVPPALHHACLASLSLLALLLLALLVRRRRLWPHCAHCRPGLPSPVDFLAGNRSWTVPTAVFVALFSNLCLLLPDENPLPFLNRTAASSPDGEPETSRGPWKLLALLYYPALYYPLAACATAGHRAAYLLGTVLSWVHVSVQVWQRAECPQDPKIYKHYSLLASLPLLLSLGFLSLWYPVQVVQSIRHRTGAGSQGLQTSYSEKYLRALLCPKKLDSCSHPASKRSLLSRAWAFSQHSIYTPEPGFCLPLKLVISATLTGTATYQVALLLLVSVVPTVQKVRAGITTDVSYLLAGFGIVLSEDRQEVVELVKHHLWAVEACYISALVLSCSLTFLLLIRSLRTHRANLKALHRGAALDLGPPLQSTHPSRQAIVCWMSFSAYQTAFSCLGLLVQQVIFFLGTTILAFLVFVPLLHGRNLLLLRSLESTWPFWLTLVLAVILQNIAANWVFLESHHGYPELTNRRMLCVATFLLFPINMLVGAIMAIWRVLLSSLYNTVHLGQMDLSLLPQRAASLDPGYHTYRNFLRIEASQSHPGVIAFCALLLHVPSPQPQPPLAPQDSLRPAAEEEGMQLLQTKDLMAKGAGPKGSRSRARWGLAYTLLHNPSLQAFRKAALTSAKANGTQP.

Residues 1–50 (MESQASENGSQTSSGVTDDYSSWYIEEPLGAEEVQPEGVNPLCQPTVPPA) lie on the Extracellular side of the membrane. N-linked (GlcNAc...) asparagine glycosylation is present at Asn8. The helical transmembrane segment at 51–71 (LHHACLASLSLLALLLLALLV) threads the bilayer. Residues 72-98 (RRRRLWPHCAHCRPGLPSPVDFLAGNR) are Cytoplasmic-facing. Residues 99 to 119 (SWTVPTAVFVALFSNLCLLLP) traverse the membrane as a helical segment. Residues 120-144 (DENPLPFLNRTAASSPDGEPETSRG) are Extracellular-facing. A helical transmembrane segment spans residues 145-165 (PWKLLALLYYPALYYPLAACA). Residues 166-168 (TAG) lie on the Cytoplasmic side of the membrane. The chain crosses the membrane as a helical span at residues 169–189 (HRAAYLLGTVLSWVHVSVQVW). Over 190 to 205 (QRAECPQDPKIYKHYS) the chain is Extracellular. A helical membrane pass occupies residues 206–226 (LLASLPLLLSLGFLSLWYPVQ). Topologically, residues 227–296 (VVQSIRHRTG…PEPGFCLPLK (70 aa)) are cytoplasmic. The tract at residues 235 to 294 (TGAGSQGLQTSYSEKYLRALLCPKKLDSCSHPASKRSLLSRAWAFSQHSIYTPEPGFCLP) is interaction with RBP1. The helical transmembrane segment at 297-317 (LVISATLTGTATYQVALLLLV) threads the bilayer. Topologically, residues 318 to 368 (SVVPTVQKVRAGITTDVSYLLAGFGIVLSEDRQEVVELVKHHLWAVEACYI) are extracellular. The helical transmembrane segment at 369 to 389 (SALVLSCSLTFLLLIRSLRTH) threads the bilayer. Topologically, residues 390-423 (RANLKALHRGAALDLGPPLQSTHPSRQAIVCWMS) are cytoplasmic. A helical transmembrane segment spans residues 424 to 444 (FSAYQTAFSCLGLLVQQVIFF). At 445–474 (LGTTILAFLVFVPLLHGRNLLLLRSLESTW) the chain is on the extracellular side. Residues 475–495 (PFWLTLVLAVILQNIAANWVF) form a helical membrane-spanning segment. Topologically, residues 496 to 510 (LESHHGYPELTNRRM) are cytoplasmic. The helical intramembrane region spans 511-548 (LCVATFLLFPINMLVGAIMAIWRVLLSSLYNTVHLGQM). At 549–670 (DLSLLPQRAA…TSAKANGTQP (122 aa)) the chain is on the cytoplasmic side. Tyr644 is modified (phosphotyrosine).

In terms of assembly, homodimer. Interacts with JAK2 and STAT5. Interacts (via extracellular domains) with RBP4. Interacts (via cytoplasmic domains) with RBP1. Post-translationally, phosphorylated on tyrosine residues in response to RBP4 binding. Phosphorylation requires the presence of LRAT, suggesting it may be triggered by the uptake of retinol that is then metabolized within the cell to retinoids that function as signaling molecules.

It localises to the cell membrane. Functionally, functions as a retinol transporter. Accepts all-trans retinol from the extracellular retinol-binding protein RBP4, facilitates retinol transport across the cell membrane, and then transfers retinol to the cytoplasmic retinol-binding protein RBP1. Retinol uptake is enhanced by LRAT, an enzyme that converts retinol to all-trans retinyl esters, the storage forms of vitamin A. Contributes to the activation of a signaling cascade that depends on retinol transport and LRAT-dependent generation of retinol metabolites that then trigger activation of JAK2 and its target STAT5, and ultimately increase the expression of SOCS3 and inhibit cellular responses to insulin. Important for the homeostasis of vitamin A and its derivatives, such as retinoic acid. STRA6-mediated transport is particularly important in the eye, and under conditions of dietary vitamin A deficiency. Does not transport retinoic acid. This Rattus norvegicus (Rat) protein is Receptor for retinol uptake STRA6 (Stra6).